A 588-amino-acid chain; its full sequence is Proteasome-associated ATPase (588 aa).

Residues 1–10 show a composition bias toward basic and acidic residues; sequence MAAHDDDMNR. The segment at 1–23 is disordered; that stretch reads MAAHDDDMNRGIRPGRGSDDPSG. A coiled-coil region spans residues 47 to 94; that stretch reads RILEERIVELQTNLAGVSAQNERLANTLREARDQIVALKEEVDRLAQP. ATP is bound at residue 276-281; that stretch reads GCGKTL. Residues 587–588 form a docks into pockets in the proteasome alpha-ring region; it reads YL.

This sequence belongs to the AAA ATPase family. As to quaternary structure, homohexamer. Assembles into a hexameric ring structure that caps the 20S proteasome core. Strongly interacts with the prokaryotic ubiquitin-like protein Pup through a hydrophobic interface; the interacting region of ARC lies in its N-terminal coiled-coil domain. There is one Pup binding site per ARC hexamer ring. Upon ATP-binding, the C-terminus of ARC interacts with the alpha-rings of the proteasome core, possibly by binding to the intersubunit pockets.

Its pathway is protein degradation; proteasomal Pup-dependent pathway. Its function is as follows. ATPase which is responsible for recognizing, binding, unfolding and translocation of pupylated proteins into the bacterial 20S proteasome core particle. May be essential for opening the gate of the 20S proteasome via an interaction with its C-terminus, thereby allowing substrate entry and access to the site of proteolysis. Thus, the C-termini of the proteasomal ATPase may function like a 'key in a lock' to induce gate opening and therefore regulate proteolysis. This Streptomyces scabiei (strain 87.22) protein is Proteasome-associated ATPase.